Reading from the N-terminus, the 318-residue chain is Methionyl-tRNA formyltransferase (318 aa).

120 to 123 is a (6S)-5,6,7,8-tetrahydrofolate binding site; that stretch reads SLLP.

Belongs to the Fmt family.

It carries out the reaction L-methionyl-tRNA(fMet) + (6R)-10-formyltetrahydrofolate = N-formyl-L-methionyl-tRNA(fMet) + (6S)-5,6,7,8-tetrahydrofolate + H(+). Functionally, attaches a formyl group to the free amino group of methionyl-tRNA(fMet). The formyl group appears to play a dual role in the initiator identity of N-formylmethionyl-tRNA by promoting its recognition by IF2 and preventing the misappropriation of this tRNA by the elongation apparatus. The polypeptide is Methionyl-tRNA formyltransferase (Variovorax paradoxus (strain S110)).